The sequence spans 204 residues: ATP-dependent Clp protease proteolytic subunit (204 aa).

The active-site Nucleophile is Ser-102. The active site involves His-127.

This sequence belongs to the peptidase S14 family. Fourteen ClpP subunits assemble into 2 heptameric rings which stack back to back to give a disk-like structure with a central cavity, resembling the structure of eukaryotic proteasomes.

Its subcellular location is the cytoplasm. The catalysed reaction is Hydrolysis of proteins to small peptides in the presence of ATP and magnesium. alpha-casein is the usual test substrate. In the absence of ATP, only oligopeptides shorter than five residues are hydrolyzed (such as succinyl-Leu-Tyr-|-NHMec, and Leu-Tyr-Leu-|-Tyr-Trp, in which cleavage of the -Tyr-|-Leu- and -Tyr-|-Trp bonds also occurs).. Cleaves peptides in various proteins in a process that requires ATP hydrolysis. Has a chymotrypsin-like activity. Plays a major role in the degradation of misfolded proteins. In Neisseria meningitidis serogroup C (strain 053442), this protein is ATP-dependent Clp protease proteolytic subunit.